Reading from the N-terminus, the 450-residue chain is Phosphomethylpyrimidine synthase (450 aa).

Residues Asn80, Met109, Tyr138, His173, 193-195 (SRG), 234-237 (DSLR), and Glu273 each bind substrate. His277 is a Zn(2+) binding site. A substrate-binding site is contributed by Tyr300. His341 contributes to the Zn(2+) binding site. Positions 421, 424, and 429 each coordinate [4Fe-4S] cluster.

Belongs to the ThiC family. Homodimer. [4Fe-4S] cluster serves as cofactor.

The catalysed reaction is 5-amino-1-(5-phospho-beta-D-ribosyl)imidazole + S-adenosyl-L-methionine = 4-amino-2-methyl-5-(phosphooxymethyl)pyrimidine + CO + 5'-deoxyadenosine + formate + L-methionine + 3 H(+). The protein operates within cofactor biosynthesis; thiamine diphosphate biosynthesis. Catalyzes the synthesis of the hydroxymethylpyrimidine phosphate (HMP-P) moiety of thiamine from aminoimidazole ribotide (AIR) in a radical S-adenosyl-L-methionine (SAM)-dependent reaction. The protein is Phosphomethylpyrimidine synthase of Campylobacter fetus subsp. fetus (strain 82-40).